The chain runs to 172 residues: Folate transporter FolT (172 aa).

Helical transmembrane passes span 6 to 26, 35 to 55, 71 to 91, 101 to 121, and 131 to 151; these read VMIYMAFMITLEIVFTRFLSI, FGFIPVAMSGMMFGPLLAGIV, AYFPGFTLSAFVGAVIYGVFF, VLLAVGIITVLVNLTMNTIWL, and VLFVTRLVKEAIMFPIHAIVI.

Forms a stable energy-coupling factor (ECF) transporter complex composed of a membrane-embedded substrate-binding protein (S component), two ATP-binding proteins (A components) and a transmembrane protein (T component).

The protein localises to the cell membrane. Functionally, folate-binding protein that interacts with the energy-coupling factor (ECF) ABC-transporter complex. Unlike classic ABC transporters this ECF transporter provides the energy necessary to transport a number of different substrates. The substrates themselves are bound by transmembrane, not extracytoplasmic soluble proteins. This is Folate transporter FolT (folT) from Clostridium novyi (strain NT).